Reading from the N-terminus, the 692-residue chain is Ribonuclease J (692 aa).

Residues 1–91 (MTDNNQNNEN…RNYAKEELDN (91 aa)) are disordered. Basic and acidic residues predominate over residues 9 to 25 (ENHENSSENSKDHHEAR). The segment covering 57–79 (HHKKEHRPNKKPNNHHKPKHASQ) has biased composition (basic residues). N6-acetyllysine occurs at positions 135 and 141. H209, H211, D213, H214, H278, and D300 together coordinate Zn(2+). Residues K324, K338, and K398 each carry the N6-acetyllysine modification. 501 to 505 (HVSGH) serves as a coordination point for substrate. The residue at position 512 (K512) is an N6-acetyllysine. H527 provides a ligand contact to Zn(2+). N6-acetyllysine is present on residues K548, K635, and K650.

It belongs to the metallo-beta-lactamase superfamily. RNA-metabolizing metallo-beta-lactamase-like family. Bacterial RNase J subfamily. In terms of assembly, homodimer. Homotetramer; dimer of homodimers. Interacts with RNA helicase RhpA, might be a member of a minimal RNA degradosome complex. Zn(2+) serves as cofactor. Acetylated on nine lysine residues. Some of the residues are acetylated by multiple different mechanisms. RimL is partially responsible for the acetylation of Lys-324, Lys-398 and Lys-650. HPB8_1270 homolog is partially responsible for the acetylation of Lys-324, Lys-398, Lys-512 and Lys-650. Acetyl-phosphate-mediated non-enzymatic acetylation pathway takes part in the acetylation of Lys-135, Lys-324, Lys-398, Lys-512 and Lys-650. Acetylation of the remaining residues Lys-141, Lys-338, Lys-548 and Lys-635 occurs by a yet undetermined mechanism. Acetylation on a number of these residues is important for growth regulation and proper cell morphology.

It is found in the cytoplasm. Its activity is regulated as follows. Catalytic activity is regulated by the balance between homodimers and homotetramers, with homotetramers being the active forms of this enzyme. Acetylation allosterically regulates the homooligomerization state and hence the catalytic activity. An RNase that has 5'-3' exoribonuclease and endoribonuclease activity. Degrades 5'-monophosphorylated ssRNA and dsRNA, considerably more active on ssRNA. Association with RhpA significantly increases the dsRNase activity. Degrades RNA substrate with hairpin structures at both ends with low activity, but presence of RhpA significantly increases the activity on this substrate. Stimulates ATPase activity of RNA helicase RhpA. Involved in stabilization of mRNA but apparently not rRNA. In Helicobacter pylori (strain J99 / ATCC 700824) (Campylobacter pylori J99), this protein is Ribonuclease J.